We begin with the raw amino-acid sequence, 348 residues long: Rhodopsin (348 aa).

Methionine 1 bears the N-acetylmethionine mark. At 1-36 (MNGTEGPNFYVPFSNKTGVVRSPFEYPQYYLAEPWQ) the chain is on the extracellular side. N-linked (GlcNAc...) asparagine glycans are attached at residues asparagine 2 and asparagine 15. The chain crosses the membrane as a helical span at residues 37–61 (FSMLAAYMFLLIVLGFPINFLTLYV). Topologically, residues 62–73 (TVQHKKLRTPLN) are cytoplasmic. Residues 74–96 (YILLNLAVADLFMVFGGFTTTLY) form a helical membrane-spanning segment. At 97-110 (TSLHGYFVFGPTGC) the chain is on the extracellular side. A disulfide bridge connects residues cysteine 110 and cysteine 187. The helical transmembrane segment at 111–133 (NLEGFFATLGGEIALWSLVVLAI) threads the bilayer. A 'Ionic lock' involved in activated form stabilization motif is present at residues 134–136 (ERY). Residues 134-152 (ERYVVVCKPMSNFRFGENH) are Cytoplasmic-facing. Residues 153–173 (AIMGVGLTWVMALACAAPPLV) traverse the membrane as a helical segment. The Extracellular segment spans residues 174 to 202 (GWSRYIPEGMQCSCGIDYYTLKPEVNNES). A Zn(2+)-binding site is contributed by glutamate 201. Residues 203–224 (FVIYMFVVHFTIPMIVIFFCYG) traverse the membrane as a helical segment. Residues 225-252 (QLVFTVKEAAAQQQESATTQKAEKEVTR) lie on the Cytoplasmic side of the membrane. Residues 253 to 274 (MVIIMVIAFLICWVPYASVAFY) traverse the membrane as a helical segment. Topologically, residues 275 to 286 (IFTHQGFNFGPI) are extracellular. Glutamine 279 provides a ligand contact to Zn(2+). A helical membrane pass occupies residues 287–308 (FMTLPAFFAKAAAIYNPVIYIM). Lysine 296 is modified (N6-(retinylidene)lysine). Over 309 to 348 (MNKQFRTCMITTLCCGKNPLGDDEVSASASKTETSQVAPA) the chain is Cytoplasmic. Residues cysteine 322 and cysteine 323 are each lipidated (S-palmitoyl cysteine). The segment at 330–348 (DDEVSASASKTETSQVAPA) is interaction with SAG. 2 positions are modified to phosphoserine: serine 334 and serine 338. Phosphothreonine occurs at positions 340 and 342. At serine 343 the chain carries Phosphoserine.

It belongs to the G-protein coupled receptor 1 family. Opsin subfamily. In terms of assembly, homodimer. Interacts (phosphorylated form) with SAG. Interacts with GNAT1. Interacts with GNAT3. SAG and G-proteins compete for a common binding site. Interacts with GRK1. Interacts with PRCD; the interaction promotes PRCD stability. Forms a complex with ASAP1 and ARF4. Forms a complex with ASAP1, RAB11A, Rabin8/RAB3IP, ARF4 and RAB11FIP3; the complex regulates Golgi-to-cilia rhodopsin/RHO transport in photoreceptors. In terms of processing, phosphorylated on some or all of the serine and threonine residues present in the C-terminal region. Post-translationally, contains one covalently linked retinal chromophore. Upon light absorption, the covalently bound 11-cis-retinal is converted to all-trans-retinal. After hydrolysis of the Schiff base and release of the covalently bound all-trans-retinal, active rhodopsin is regenerated by binding of a fresh molecule of 11-cis-retinal.

The protein localises to the membrane. The protein resides in the cell projection. It localises to the cilium. It is found in the photoreceptor outer segment. Functionally, photoreceptor required for image-forming vision at low light intensity. Required for photoreceptor cell viability after birth. Light-induced isomerization of 11-cis to all-trans retinal triggers a conformational change that activates signaling via G-proteins. Subsequent receptor phosphorylation mediates displacement of the bound G-protein alpha subunit by the arrestin SAG and terminates signaling. This Pagophilus groenlandicus (Harp seal) protein is Rhodopsin (RHO).